Here is a 78-residue protein sequence, read N- to C-terminus: Acyl carrier protein (78 aa).

Residues 2 to 77 enclose the Carrier domain; that stretch reads SDTADRVKKI…DAIKYIDENK (76 aa). S37 carries the post-translational modification O-(pantetheine 4'-phosphoryl)serine.

It belongs to the acyl carrier protein (ACP) family. 4'-phosphopantetheine is transferred from CoA to a specific serine of apo-ACP by AcpS. This modification is essential for activity because fatty acids are bound in thioester linkage to the sulfhydryl of the prosthetic group.

Its subcellular location is the cytoplasm. Its pathway is lipid metabolism; fatty acid biosynthesis. Functionally, carrier of the growing fatty acid chain in fatty acid biosynthesis. The protein is Acyl carrier protein of Novosphingobium aromaticivorans (strain ATCC 700278 / DSM 12444 / CCUG 56034 / CIP 105152 / NBRC 16084 / F199).